The following is a 541-amino-acid chain: tRNA uridine(34) acetyltransferase (541 aa).

The tract at residues 76-336 (KPVRTISGVA…GEYKPYREEE (261 aa)) is radical S-adenosyl-L-methionine (rSAM). Residues 79 to 350 (RTISGVAVVA…ISYAKSIMPK (272 aa)) form the Radical SAM core domain. Residues cysteine 96, cysteine 101, and cysteine 104 each coordinate [4Fe-4S] cluster. Acetyl-CoA-binding positions include lysine 156, 467–470 (QLHV), 491–493 (YGR), and tyrosine 524. Residues 401-541 (VMYKKGIMPD…VGAYMGKYLE (141 aa)) enclose the N-acetyltransferase domain.

Belongs to the ELP3 family. [4Fe-4S] cluster serves as cofactor.

The enzyme catalyses uridine(34) in tRNA + acetyl-CoA + S-adenosyl-L-methionine + H2O = 5-(carboxymethyl)uridine(34) in tRNA + 5'-deoxyadenosine + L-methionine + CoA + 2 H(+). It functions in the pathway tRNA modification. TRNA uridine(34) acetyltransferase, which mediates formation of carboxymethyluridine in the wobble base at position 34 in tRNAs. The proposed mechanism is the following: (i) recruits S-adenosyl-L-methionine and cleaves it to generate a 5'-deoxyadenosine radical (5'-dA) in the radical S-adenosyl-L-methionine (rSAM) region, (ii) hydrolyzes acetyl-CoA in the N-acetyltransferase domain and (iii) an acetyl radical is formed by the products of the two domains and (iv) is transferred onto the C5 position of uridine(34) in the bound tRNA molecule. Does not show protein lysine acetyltransferase activity. The chain is tRNA uridine(34) acetyltransferase from Methanocaldococcus jannaschii (strain ATCC 43067 / DSM 2661 / JAL-1 / JCM 10045 / NBRC 100440) (Methanococcus jannaschii).